The primary structure comprises 507 residues: FSD1-like protein (507 aa).

Residues 70-109 (KQEQVRKSQELQSQLSQCNNALENSEELLEFATRSLDIKE) are a coiled coil. The region spanning 105-162 (LDIKEPEEFSKAARQIKDRVTMASAFRLSLKPKVSDNMTHLMVDFSQERQMLQTLKFL) is the COS domain. The Fibronectin type-III domain maps to 164-268 (VPKAPEIDPV…DPVTLETRAL (105 aa)). The B30.2/SPRY domain occupies 291–484 (DPTGGKGQES…LSTGMQVPSA (194 aa)). A disordered region spans residues 292-345 (PTGGKGQESKIKGKENKGSVHVTSLKKHTSGTPSPKRTSVGSRPPAVRGSRDRF). A compositionally biased stretch (basic and acidic residues) spans 298–309 (QESKIKGKENKG). Residues 321-332 (SGTPSPKRTSVG) show a composition bias toward polar residues. Ser-498 and Ser-501 each carry phosphoserine.

The protein is FSD1-like protein (Fsd1l) of Mus musculus (Mouse).